Consider the following 408-residue polypeptide: Serine/threonine transporter SstT (408 aa).

9 consecutive transmembrane segments (helical) span residues Leu11 to Ala31, Phe43 to Leu63, Ile82 to Met102, Ala141 to Leu161, Ile192 to Gly212, Leu216 to Val236, Met298 to Ile318, Ala339 to Ile359, and Val363 to Thr383.

The protein belongs to the dicarboxylate/amino acid:cation symporter (DAACS) (TC 2.A.23) family.

Its subcellular location is the cell inner membrane. The catalysed reaction is L-serine(in) + Na(+)(in) = L-serine(out) + Na(+)(out). The enzyme catalyses L-threonine(in) + Na(+)(in) = L-threonine(out) + Na(+)(out). In terms of biological role, involved in the import of serine and threonine into the cell, with the concomitant import of sodium (symport system). The polypeptide is Serine/threonine transporter SstT (Shewanella sp. (strain MR-7)).